A 539-amino-acid chain; its full sequence is MFCRQCEQTANPCTKLGVCGKQPDTAYLQDLLTYALQGLATYAKEALKESSQTQNVMKRINKFTVEALFATLTNVNFDSEAIKNFIYEAVKLRDELKQMGFKVQETESCKFQPADNLQELVKQGEEANQKIFHSSSNEDVQSLKEITLYSLRGIAAYTDHAQILGQEDEKVYAFIYEALDAMQRNGDLDFWLNMVLRAGEINLRAMELLDAANTGRYGHPVPTPVPLGHKKGKAIVVSGHDLRDLELLLQQTEGKGIYVYTHGEMLPCHGYPELKKYKHFYGHYGTAWQNQQREFAQFPGAILMTTNCIIKPQESYKDRIFTTGVVGWPGVKHIKDKDFTPVIEKALELPGFTEDKEDKTVMVGFARNSVLSVADKVIELVKAGKIRHFFLVGGCDGAKPGRSYYTEFVEKTPKDTIVLTLACGKFRFFDKELGSINGIPRLLDVGQCNDAYSAIQIALALSKAFNVSINELPLSLILSWFEQKAVAILTTLLYLGIKNIRLGPTLPAFVSPNVLKVLVDNFGIKPIKTAEEDLKDILR.

4 residues coordinate [4Fe-4S] cluster: Cys-3, Cys-6, Cys-13, and Cys-19. Positions 240, 264, 308, 395, 423, 448, 482, and 484 each coordinate hybrid [4Fe-2O-2S] cluster. At Cys-395 the chain carries Cysteine persulfide.

Belongs to the HCP family. [4Fe-4S] cluster is required as a cofactor. The cofactor is hybrid [4Fe-2O-2S] cluster.

It is found in the cytoplasm. The enzyme catalyses A + NH4(+) + H2O = hydroxylamine + AH2 + H(+). Catalyzes the reduction of hydroxylamine to form NH(3) and H(2)O. This is Hydroxylamine reductase from Thermodesulfovibrio yellowstonii (strain ATCC 51303 / DSM 11347 / YP87).